The following is an 88-amino-acid chain: Small ribosomal subunit protein bS20 (88 aa).

The tract at residues 1–25 (MANSAQARKRARQAVAQNAHNSSLR) is disordered.

Belongs to the bacterial ribosomal protein bS20 family.

Its function is as follows. Binds directly to 16S ribosomal RNA. This is Small ribosomal subunit protein bS20 from Cupriavidus pinatubonensis (strain JMP 134 / LMG 1197) (Cupriavidus necator (strain JMP 134)).